Here is a 428-residue protein sequence, read N- to C-terminus: Histone deacetylase 3 (428 aa).

The histone deacetylase stretch occupies residues 3-316; the sequence is NRTAYFYDPD…WTFETSLLVE (314 aa). Residues His17, Gly21, and Lys25 each coordinate 1D-myo-inositol 1,4,5,6-tetrakisphosphate. Residue His135 is part of the active site. Asp170, His172, and Asp259 together coordinate Zn(2+). A 1D-myo-inositol 1,4,5,6-tetrakisphosphate-binding site is contributed by Arg265. The tract at residues 381 to 428 is disordered; sequence PSDLLSYERPDEADPEERGSEENFSRPEAANEFYDGDHDHDKESDVEI. Basic and acidic residues-rich tracts occupy residues 386-405 and 415-428; these read SYERPDEADPEERGSEENFS and DGDHDHDKESDVEI.

The protein belongs to the histone deacetylase family. HD type 1 subfamily.

It localises to the nucleus. The protein resides in the chromosome. Its subcellular location is the cytoplasm. The protein localises to the cytosol. The enzyme catalyses N(6)-acetyl-L-lysyl-[histone] + H2O = L-lysyl-[histone] + acetate. It carries out the reaction N(6)-acetyl-L-lysyl-[protein] + H2O = L-lysyl-[protein] + acetate. It catalyses the reaction N(6)-(2E)-butenoyl-L-lysyl-[protein] + H2O = (2E)-2-butenoate + L-lysyl-[protein]. The catalysed reaction is N(6)-(2-hydroxyisobutanoyl)-L-lysyl-[protein] + H2O = 2-hydroxy-2-methylpropanoate + L-lysyl-[protein]. The enzyme catalyses N(6)-[(S)-lactoyl]-L-lysyl-[protein] + H2O = (S)-lactate + L-lysyl-[protein]. Inositol tetraphosphate (1D-myo-inositol 1,4,5,6-tetrakisphosphate) promotes the histone deacetylase activity by acting as an intermolecular glue between hdac3 and N-Cor repressor complex components. Histone deacetylase that catalyzes the deacetylation of lysine residues on the N-terminal part of the core histones (H2A, H2B, H3 and H4), and some other non-histone substrates. Histone deacetylation gives a tag for epigenetic repression and plays an important role in transcriptional regulation, cell cycle progression and developmental events. Histone deacetylases act via the formation of large multiprotein complexes, such as N-Cor repressor complex, which activate the histone deacetylase activity. Participates in the BCL6 transcriptional repressor activity by deacetylating the H3 'Lys-27' (H3K27) on enhancer elements, antagonizing EP300 acetyltransferase activity and repressing proximal gene expression. Also functions as a deacetylase for non-histone targets. In addition to protein deacetylase activity, also acts as a protein-lysine deacylase by recognizing other acyl groups: catalyzes removal of (2E)-butenoyl (crotonyl), lactoyl (lactyl) and 2-hydroxyisobutanoyl (2-hydroxyisobutyryl) acyl groups from lysine residues, leading to protein decrotonylation, delactylation and de-2-hydroxyisobutyrylation, respectively. The sequence is that of Histone deacetylase 3 (hdac3) from Danio rerio (Zebrafish).